Consider the following 239-residue polypeptide: Suppressor of organelle fusion 1 (239 aa).

Belongs to the WD repeat WDR91 family. Interacts with sorf-2; the interaction is direct. Interacts with bec-1.

The protein resides in the early endosome. It localises to the late endosome. The protein localises to the cytoplasm. Its function is as follows. Together with sorf-2 negatively regulates the levels of phosphatidylinositol 3-phosphate (PtdIns3P) to enable the conversion of early endosomes to late endosomes. Binds to sorf-2 and the sorf-1-sorf-2 complex likely acts through bec-1, a non-catalytic subunit of phosphatidylinositol 3-kinase (PI3K), to suppress PI3K activity, thereby negatively regulating endosomal PtdIns3P levels. In Caenorhabditis elegans, this protein is Suppressor of organelle fusion 1.